We begin with the raw amino-acid sequence, 508 residues long: Light-independent protochlorophyllide reductase subunit B (508 aa).

Aspartate 36 lines the [4Fe-4S] cluster pocket. The active-site Proton donor is aspartate 294. A substrate-binding site is contributed by 429-430 (GM).

This sequence belongs to the ChlB/BchB/BchZ family. In terms of assembly, protochlorophyllide reductase is composed of three subunits; ChlL, ChlN and ChlB. Forms a heterotetramer of two ChlB and two ChlN subunits. It depends on [4Fe-4S] cluster as a cofactor.

It carries out the reaction chlorophyllide a + oxidized 2[4Fe-4S]-[ferredoxin] + 2 ADP + 2 phosphate = protochlorophyllide a + reduced 2[4Fe-4S]-[ferredoxin] + 2 ATP + 2 H2O. Its pathway is porphyrin-containing compound metabolism; chlorophyll biosynthesis (light-independent). Functionally, component of the dark-operative protochlorophyllide reductase (DPOR) that uses Mg-ATP and reduced ferredoxin to reduce ring D of protochlorophyllide (Pchlide) to form chlorophyllide a (Chlide). This reaction is light-independent. The NB-protein (ChlN-ChlB) is the catalytic component of the complex. The chain is Light-independent protochlorophyllide reductase subunit B from Trichormus variabilis (strain ATCC 29413 / PCC 7937) (Anabaena variabilis).